The chain runs to 961 residues: MSSVFADPRVKELLNLHRSPKLATEGKTPPSQVQDLVNKYSRLGSNVVSHPTRSSPEKTTDKPADSKPSIPPLKSESVMTRLTALSSNNTTQNVASLVTAIASHPATAALPKQEASQQPVIPTSVEKRAVTQPLSQQNMNKLMNAIDPQAAPLIEDQVAGKHTGTKPLLTLQQQQAISSLPTKSERESALNEIALNTAIQSAQHANMELSKAGITFPMWFFGVQNQSDLVSRSFISLAHIQQPMVMNDSLLQEHLLVSDCIAVLQGCMQTTYLQVSEQNKEYVVTIRKEVATELPATLVAMTQRVLVHAHARFQIVNTIYTHQVPEYGRIANAFSQALRCIIKEYDFYLADLSKKHYGKMQSSAERGSLSLQTLEVKTKQIHIILENVADLCSRLGVVRGCALLQQLETAVLQSSGLSVKEVFQYLLSESLKPLGRIMDRYINEAVIPDSDAADFFIRKSHSTELAEEQGKTTINTWMQMFKVDDAQVPLFLNNIKTHLCDIGRSTVLLKWKKKQYIDKGPNASGQELLLLSAEASGETTQGFRHGEETVASLVCGDGSTGDLELAHIRLYKQLIDINARVQTKVLDFFINPEYLDFRGHLQNIYAFYLVMAGDFLSCFVESAISELVLSRSVANILRIRSKFKMVIKTSSLANLPYNERMNVIVCPELFKHHLNSVLYPQTYVPDRATDSPDPKVLNLLGLQYDVTYPLNLVLTTPVMERLNLVFRHILRAKVSEIELQKAWTTLQRLRKLERVPHDKIEVYANALRSDKSPIIIFFGVAYKMLITMLDFIHSLQFQYVTILTECIAKFQDTLVNAKSLDDLVSGMSAFANGLIMSLGLVSNNVVNILDTLFNDCIVYSHHIVKTFCIISNEDDEFIRKIVTINEESREGKSGPRGVKGSERMTSLLKKREAIEMTRLIAIANSVYSLIVDNRGLIATLMTKFNKGVASYEQVIRNFDDR.

The segment at 15–76 (NLHRSPKLAT…KPSIPPLKSE (62 aa)) is disordered. Residues 43-54 (LGSNVVSHPTRS) are compositionally biased toward polar residues. Residues 55 to 65 (SPEKTTDKPAD) show a composition bias toward basic and acidic residues.

It belongs to the TUBGCP family. Component of the gamma-tubulin small complex (gamma-TuSC) composed of tubulin gamma chain, gamma-tubulin complex protein 2 (GCP2) and gamma-tubulin complex protein 3 (GCP3). Interacts with tubulin gamma chain.

It is found in the cytoplasm. It localises to the cytoskeleton. The protein localises to the flagellum axoneme. Its subcellular location is the flagellum basal body. Functionally, component of the gamma-tubulin small complex (gamma-TuSC) involved in microtubule (MT) nucleation for the formation of median bodies and in the biogenesis of flagella. Gamma-TuSC may be required for the correct positioning of EB1 within the trophozoites. The sequence is that of Gamma-tubulin small complex component GCP2 from Giardia intestinalis (strain ATCC 50803 / WB clone C6) (Giardia lamblia).